Consider the following 369-residue polypeptide: Beta-1,4-galactosyltransferase 2 (369 aa).

At 1-15 the chain is on the cytoplasmic side; sequence MSRLLGGTLERVCKA. The helical; Signal-anchor for type II membrane protein transmembrane segment at 16 to 36 threads the bilayer; that stretch reads VLLLCLLHFLVAVILYFDVYA. The Lumenal portion of the chain corresponds to 37-369; that stretch reads QHLAFFSRFS…GRPMSWLNQG (333 aa). A compositionally biased stretch (polar residues) spans 59–75; the sequence is SSSTNCSRPNATASSSG. The interval 59–90 is disordered; the sequence is SSSTNCSRPNATASSSGLPEVPSARPGPTAPV. N-linked (GlcNAc...) asparagine glycans are attached at residues Asn-63 and Asn-68. Cys-94 and Cys-136 form a disulfide bridge. UDP-alpha-D-galactose contacts are provided by residues 147-151, 186-188, 214-215, and Trp-275; these read PFRHR, FNR, and VD. Cys-208 and Cys-227 are joined by a disulfide. Asp-215 contacts Mn(2+). 277-280 is a binding site for N-acetyl-D-glucosamine; that stretch reads GEDD. His-308 contacts Mn(2+). 308–310 contributes to the UDP-alpha-D-galactose binding site; the sequence is HDR. Arg-320 is an N-acetyl-D-glucosamine binding site. An N-linked (GlcNAc...) asparagine glycan is attached at Asn-354.

Belongs to the glycosyltransferase 7 family. Mn(2+) serves as cofactor.

Its subcellular location is the golgi apparatus. It is found in the golgi stack membrane. The catalysed reaction is D-glucose + UDP-alpha-D-galactose = lactose + UDP + H(+). The enzyme catalyses an N-acetyl-beta-D-glucosaminyl derivative + UDP-alpha-D-galactose = a beta-D-galactosyl-(1-&gt;4)-N-acetyl-beta-D-glucosaminyl derivative + UDP + H(+). It catalyses the reaction N-acetyl-D-glucosamine + UDP-alpha-D-galactose = beta-D-galactosyl-(1-&gt;4)-N-acetyl-D-glucosamine + UDP + H(+). The protein operates within protein modification; protein glycosylation. Its function is as follows. Responsible for the synthesis of complex-type N-linked oligosaccharides in many glycoproteins as well as the carbohydrate moieties of glycolipids. Can produce lactose. This chain is Beta-1,4-galactosyltransferase 2 (B4GALT2), found in Cricetulus griseus (Chinese hamster).